The following is a 408-amino-acid chain: Aminomethyltransferase, mitochondrial (408 aa).

The N-terminal 30 residues, 1–30 (MRGGLWQLGQSITRRLANGGDKKAVARRCF), are a transit peptide targeting the mitochondrion. Residues glutamate 235, arginine 266, and tyrosine 404 each contribute to the substrate site.

This sequence belongs to the GcvT family. In terms of assembly, the glycine cleavage system is composed of four proteins: P, T, L and H.

It is found in the mitochondrion. It catalyses the reaction N(6)-[(R)-S(8)-aminomethyldihydrolipoyl]-L-lysyl-[protein] + (6S)-5,6,7,8-tetrahydrofolate = N(6)-[(R)-dihydrolipoyl]-L-lysyl-[protein] + (6R)-5,10-methylene-5,6,7,8-tetrahydrofolate + NH4(+). Functionally, the glycine cleavage system catalyzes the degradation of glycine. The protein is Aminomethyltransferase, mitochondrial (GDCST) of Pisum sativum (Garden pea).